The following is a 229-amino-acid chain: Transmembrane emp24 domain-containing protein 5 (229 aa).

An N-terminal signal peptide occupies residues 1–27 (MGDKIWLPFPVLLLAALPPVLLPGAAG). At 28-196 (FTPSLDSDFT…IQESNFDRVN (169 aa)) the chain is on the lumenal side. The 82-residue stretch at 45-126 (RECFYQPMPL…EKVIFFELIL (82 aa)) folds into the GOLD domain. Residues 197 to 217 (FWSMVNLVVMVVVSAIQVYML) form a helical membrane-spanning segment. The Cytoplasmic portion of the chain corresponds to 218–229 (KSLFEDKRKSRT).

This sequence belongs to the EMP24/GP25L family. As to quaternary structure, interacts with TMED9 and TMED10.

It is found in the endoplasmic reticulum membrane. The protein localises to the golgi apparatus. It localises to the cis-Golgi network membrane. The protein resides in the endoplasmic reticulum-Golgi intermediate compartment membrane. In terms of biological role, potential role in vesicular protein trafficking, mainly in the early secretory pathway. Required for the maintenance of the Golgi apparatus; involved in protein exchange between Golgi stacks during assembly. Probably not required for COPI-vesicle-mediated retrograde transport. The chain is Transmembrane emp24 domain-containing protein 5 (TMED5) from Pongo abelii (Sumatran orangutan).